We begin with the raw amino-acid sequence, 121 residues long: MSITKDQIIEAVSAMSVMDVVELISAMEEKFGVSAAAAVAVAAGPAEAAEEKTEFDVILKAAGANKVAVIKAVRGATGLGLKEAKDLVESAPAALKEGVSKDDAEALKKSLEEAGAEVEVK.

It belongs to the bacterial ribosomal protein bL12 family. As to quaternary structure, homodimer. Part of the ribosomal stalk of the 50S ribosomal subunit. Forms a multimeric L10(L12)X complex, where L10 forms an elongated spine to which 2 to 4 L12 dimers bind in a sequential fashion. Binds GTP-bound translation factors.

Forms part of the ribosomal stalk which helps the ribosome interact with GTP-bound translation factors. Is thus essential for accurate translation. The chain is Large ribosomal subunit protein bL12 from Salmonella agona (strain SL483).